A 502-amino-acid polypeptide reads, in one-letter code: Cytochrome P450 71A1 (502 aa).

A helical transmembrane segment spans residues 7 to 21 (LLFLAIALTFFLLKL). Heme is bound at residue Cys-443.

It belongs to the cytochrome P450 family. The cofactor is heme. As to expression, mesocarp.

It localises to the microsome membrane. The protein resides in the endoplasmic reticulum membrane. Involved in the metabolism of compounds associated with the development of flavor in the ripening fruit process, possibly by acting as trans-cinnamic acid 4-hydrolase. In Persea americana (Avocado), this protein is Cytochrome P450 71A1 (CYP71A1).